A 277-amino-acid polypeptide reads, in one-letter code: Shikimate dehydrogenase (NADP(+)) (277 aa).

Residues 15–17 (SLS) and Thr-62 each bind shikimate. Lys-66 functions as the Proton acceptor in the catalytic mechanism. Asn-87 and Asp-102 together coordinate shikimate. NADP(+) is bound by residues 127–131 (GSGGA), 151–156 (NRTVDK), and Ile-219. A shikimate-binding site is contributed by Tyr-221. Gly-242 is an NADP(+) binding site.

Belongs to the shikimate dehydrogenase family. In terms of assembly, homodimer.

The catalysed reaction is shikimate + NADP(+) = 3-dehydroshikimate + NADPH + H(+). It functions in the pathway metabolic intermediate biosynthesis; chorismate biosynthesis; chorismate from D-erythrose 4-phosphate and phosphoenolpyruvate: step 4/7. In terms of biological role, involved in the biosynthesis of the chorismate, which leads to the biosynthesis of aromatic amino acids. Catalyzes the reversible NADPH linked reduction of 3-dehydroshikimate (DHSA) to yield shikimate (SA). This is Shikimate dehydrogenase (NADP(+)) from Bacillus cereus (strain B4264).